The chain runs to 99 residues: Protein SPIRAL1-like 5 (99 aa).

A compositionally biased stretch (gly residues) spans 1-12 (MSRGGSFGGGQS). Residues 1–99 (MSRGGSFGGG…SSLGYLFGDK (99 aa)) are disordered. The span at 27-39 (TPAPPVAPKPAPP) shows a compositional bias: pro residues. A compositionally biased stretch (polar residues) spans 56–73 (KISNNNYQRVQGQNSGNF). Phosphoserine is present on S58.

This sequence belongs to the SPIRAL1 family. Expressed exclusively in stems and flowers.

In terms of biological role, acts redundantly with SPR1 in maintaining the cortical microtubules organization essential for anisotropic cell growth. This chain is Protein SPIRAL1-like 5 (SP1L5), found in Arabidopsis thaliana (Mouse-ear cress).